A 429-amino-acid polypeptide reads, in one-letter code: UDP-N-acetylglucosamine 1-carboxyvinyltransferase (429 aa).

22-23 (KN) lines the phosphoenolpyruvate pocket. R102 serves as a coordination point for UDP-N-acetyl-alpha-D-glucosamine. C126 serves as the catalytic Proton donor. At C126 the chain carries 2-(S-cysteinyl)pyruvic acid O-phosphothioketal. Residues 131–135 (RPVDL), 171–174 (KVSV), D316, and I338 each bind UDP-N-acetyl-alpha-D-glucosamine.

It belongs to the EPSP synthase family. MurA subfamily.

It is found in the cytoplasm. The catalysed reaction is phosphoenolpyruvate + UDP-N-acetyl-alpha-D-glucosamine = UDP-N-acetyl-3-O-(1-carboxyvinyl)-alpha-D-glucosamine + phosphate. It participates in cell wall biogenesis; peptidoglycan biosynthesis. Cell wall formation. Adds enolpyruvyl to UDP-N-acetylglucosamine. The sequence is that of UDP-N-acetylglucosamine 1-carboxyvinyltransferase from Chelativorans sp. (strain BNC1).